The primary structure comprises 76 residues: uncharacterized protein (76 aa).

The protein to M.jannaschii MJ0857 N-terminal region.

This is an uncharacterized protein from Methanocaldococcus jannaschii (strain ATCC 43067 / DSM 2661 / JAL-1 / JCM 10045 / NBRC 100440) (Methanococcus jannaschii).